The primary structure comprises 49 residues: Delta-actitoxin-Axm1a (49 aa).

3 cysteine pairs are disulfide-bonded: C4/C46, C6/C36, and C29/C47.

The protein belongs to the sea anemone sodium channel inhibitory toxin family. Type I subfamily.

It is found in the secreted. Its subcellular location is the nematocyst. Functionally, binds specifically to voltage-gated sodium channels (Nav) (site 3), thereby delaying their inactivation. This toxin retains the greatest capacity to discriminate between the cardiac (Nav1.5/SCN5A) and neuronal sodium channels (2.5 nM versus 120 nM, when electrophysiologically tested and 14 nM versus 400 nM, when tested by ion flux), whereas its paralog Anthopleurin-B has the highest affinity of all anemone toxins for the mammalian sodium channel. Its ability to differentiate between cardiac and skeletal channels appears to be associated with domain 4 of the channel. This toxin does not slow or inhibit closed-state inactivation of cardiac sodium channels, but selectively modifies inactivation from the open-state. It does not display phospholipid-binding activities, suggesting that the domain IV S3-S4 linker is located at the extracellular surface and not buried in the phospholipid bilayer. This is Delta-actitoxin-Axm1a from Anthopleura xanthogrammica (Giant green sea anemone).